A 356-amino-acid polypeptide reads, in one-letter code: Uroporphyrinogen decarboxylase (356 aa).

Substrate-binding positions include 27–31, Asp77, Tyr154, Thr209, and His327; that span reads RQAGR.

The protein belongs to the uroporphyrinogen decarboxylase family. Homodimer.

The protein resides in the cytoplasm. It carries out the reaction uroporphyrinogen III + 4 H(+) = coproporphyrinogen III + 4 CO2. The protein operates within porphyrin-containing compound metabolism; protoporphyrin-IX biosynthesis; coproporphyrinogen-III from 5-aminolevulinate: step 4/4. Functionally, catalyzes the decarboxylation of four acetate groups of uroporphyrinogen-III to yield coproporphyrinogen-III. The protein is Uroporphyrinogen decarboxylase of Hahella chejuensis (strain KCTC 2396).